Reading from the N-terminus, the 310-residue chain is tRNA-splicing endonuclease subunit Sen34 (310 aa).

Positions 119–177 are disordered; that stretch reads GQAAKKQKLEQASGASSSQEAGSSQAAKEDETSDGQASGEQEEAGPSSSQAGPSNGVAP. Residues 128 to 144 are compositionally biased toward low complexity; the sequence is EQASGASSSQEAGSSQA. Residues Tyr247, His255, and Lys286 contribute to the active site.

It belongs to the tRNA-intron endonuclease family. As to quaternary structure, tRNA splicing endonuclease is a heterotetramer composed of TSEN2, TSEN15, TSEN34/LENG5 and TSEN54. tRNA splicing endonuclease complex also contains proteins of the pre-mRNA 3'-end processing machinery such as CLP1, CPSF1, CPSF4 and CSTF2.

The protein localises to the nucleus. It localises to the nucleolus. The enzyme catalyses pretRNA = a 3'-half-tRNA molecule with a 5'-OH end + a 5'-half-tRNA molecule with a 2',3'-cyclic phosphate end + an intron with a 2',3'-cyclic phosphate and a 5'-hydroxyl terminus.. Its function is as follows. Constitutes one of the two catalytic subunit of the tRNA-splicing endonuclease complex, a complex responsible for identification and cleavage of the splice sites in pre-tRNA. It cleaves pre-tRNA at the 5'- and 3'-splice sites to release the intron. The products are an intron and two tRNA half-molecules bearing 2',3'-cyclic phosphate and 5'-OH termini. There are no conserved sequences at the splice sites, but the intron is invariably located at the same site in the gene, placing the splice sites an invariant distance from the constant structural features of the tRNA body. It probably carries the active site for 3'-splice site cleavage. The tRNA splicing endonuclease is also involved in mRNA processing via its association with pre-mRNA 3'-end processing factors, establishing a link between pre-tRNA splicing and pre-mRNA 3'-end formation, suggesting that the endonuclease subunits function in multiple RNA-processing events. The polypeptide is tRNA-splicing endonuclease subunit Sen34 (TSEN34) (Homo sapiens (Human)).